The following is a 243-amino-acid chain: Carboxy-S-adenosyl-L-methionine synthase (243 aa).

S-adenosyl-L-methionine contacts are provided by residues Tyr35, 68–70 (GCS), 92–93 (DN), and Arg199.

The protein belongs to the class I-like SAM-binding methyltransferase superfamily. Cx-SAM synthase family. As to quaternary structure, homodimer.

It catalyses the reaction prephenate + S-adenosyl-L-methionine = carboxy-S-adenosyl-L-methionine + 3-phenylpyruvate + H2O. Catalyzes the conversion of S-adenosyl-L-methionine (SAM) to carboxy-S-adenosyl-L-methionine (Cx-SAM). This Helicobacter pylori (strain P12) protein is Carboxy-S-adenosyl-L-methionine synthase.